Reading from the N-terminus, the 577-residue chain is Chaperonin CPN60-1, mitochondrial (577 aa).

The N-terminal 34 residues, 1 to 34 (MYRAAASLASKARQAGNSLATRQVGSRLAWSRNY), are a transit peptide targeting the mitochondrion.

Belongs to the chaperonin (HSP60) family.

Its subcellular location is the mitochondrion. Its function is as follows. Implicated in mitochondrial protein import and macromolecular assembly. May facilitate the correct folding of imported proteins. May also prevent misfolding and promote the refolding and proper assembly of unfolded polypeptides generated under stress conditions in the mitochondrial matrix. The chain is Chaperonin CPN60-1, mitochondrial (CPN60I) from Zea mays (Maize).